Reading from the N-terminus, the 385-residue chain is Probable di-N-acetylchitobiase 2 (385 aa).

Positions 1–15 (MRIILLLFLIVFVVA) are cleaved as a signal peptide. Positions 16-377 (QSSSSSSSSG…DALASFFPQS (362 aa)) constitute a GH18 domain. 2 N-linked (GlcNAc...) asparagine glycosylation sites follow: Asn51 and Asn101. Glu129 functions as the Proton donor in the catalytic mechanism. 3 N-linked (GlcNAc...) asparagine glycosylation sites follow: Asn223, Asn272, and Asn296.

The protein belongs to the glycosyl hydrolase 18 family.

The protein localises to the lysosome. In terms of biological role, involved in the degradation of asparagine-linked glycoproteins. May hydrolyze of N-acetyl-beta-D-glucosamine (1-4)N-acetylglucosamine chitobiose core from the reducing end of the bond. The protein is Probable di-N-acetylchitobiase 2 (ctbs2) of Dictyostelium discoideum (Social amoeba).